Consider the following 452-residue polypeptide: UDP-N-acetylmuramoylalanine--D-glutamate ligase (452 aa).

119–125 lines the ATP pocket; that stretch reads GSNGKTT.

It belongs to the MurCDEF family.

The protein resides in the cytoplasm. The catalysed reaction is UDP-N-acetyl-alpha-D-muramoyl-L-alanine + D-glutamate + ATP = UDP-N-acetyl-alpha-D-muramoyl-L-alanyl-D-glutamate + ADP + phosphate + H(+). It participates in cell wall biogenesis; peptidoglycan biosynthesis. In terms of biological role, cell wall formation. Catalyzes the addition of glutamate to the nucleotide precursor UDP-N-acetylmuramoyl-L-alanine (UMA). The sequence is that of UDP-N-acetylmuramoylalanine--D-glutamate ligase from Streptococcus equi subsp. zooepidemicus (strain MGCS10565).